The following is a 312-amino-acid chain: Glycerol-3-phosphate dehydrogenase [NAD(P)+] (312 aa).

The NADPH site is built by W11, R30, R31, and K95. Residues K95, G123, and S125 each coordinate sn-glycerol 3-phosphate. NADPH is bound at residue A127. The sn-glycerol 3-phosphate site is built by K177, D230, S240, R241, and N242. Residue K177 is the Proton acceptor of the active site. R241 is a binding site for NADPH. Positions 265 and 267 each coordinate NADPH.

This sequence belongs to the NAD-dependent glycerol-3-phosphate dehydrogenase family.

Its subcellular location is the cytoplasm. The enzyme catalyses sn-glycerol 3-phosphate + NAD(+) = dihydroxyacetone phosphate + NADH + H(+). The catalysed reaction is sn-glycerol 3-phosphate + NADP(+) = dihydroxyacetone phosphate + NADPH + H(+). The protein operates within membrane lipid metabolism; glycerophospholipid metabolism. Functionally, catalyzes the reduction of the glycolytic intermediate dihydroxyacetone phosphate (DHAP) to sn-glycerol 3-phosphate (G3P), the key precursor for phospholipid synthesis. The sequence is that of Glycerol-3-phosphate dehydrogenase [NAD(P)+] from Helicobacter pylori (strain P12).